A 490-amino-acid polypeptide reads, in one-letter code: ATP synthase subunit alpha 1 (490 aa).

It belongs to the ATPase alpha/beta chains family. As to quaternary structure, F-type ATPases have 2 components, CF(1) - the catalytic core - and CF(0) - the membrane proton channel. CF(1) has five subunits: alpha(3), beta(3), gamma(1), delta(1), epsilon(1). CF(0) has three main subunits: a(1), b(2) and c(9-12). The alpha and beta chains form an alternating ring which encloses part of the gamma chain. CF(1) is attached to CF(0) by a central stalk formed by the gamma and epsilon chains, while a peripheral stalk is formed by the delta and b chains.

The protein resides in the cell inner membrane. It carries out the reaction ATP + H2O + 4 H(+)(in) = ADP + phosphate + 5 H(+)(out). Produces ATP from ADP in the presence of a proton gradient across the membrane. The alpha chain is a regulatory subunit. In Legionella pneumophila (strain Paris), this protein is ATP synthase subunit alpha 1.